Consider the following 109-residue polypeptide: U4-lycotoxin-Ls1a (109 aa).

The first 22 residues, 1–22 (MKVLVLFSVLFLTLFSYSSTEA), serve as a signal peptide directing secretion. Residues 23–44 (IDEFDSDAEEDMLSLMANEQVR) constitute a propeptide that is removed on maturation. Residues 45-88 (AKACTPRLHDCSHDRHSCCRGELFKDVCYCFYPEGEDKTEVCSC) form a knottin domain region. Disulfide bonds link Cys48–Cys63, Cys55–Cys72, Cys62–Cys88, and Cys74–Cys86. The segment at 89–108 (QQPKSHKYIEKVVDKAKTVV) is linear cationic cytotoxin domain.

This sequence belongs to the neurotoxin 19 (CSTX) family. 05 (U4-Lctx) subfamily. In terms of tissue distribution, expressed by the venom gland.

It localises to the secreted. In terms of biological role, enhances the high-affinity desensitization of human P2RX3 purinoceptors. The sequence is that of U4-lycotoxin-Ls1a from Lycosa singoriensis (Wolf spider).